A 67-amino-acid polypeptide reads, in one-letter code: Large ribosomal subunit protein bL35 (67 aa).

Belongs to the bacterial ribosomal protein bL35 family.

The sequence is that of Large ribosomal subunit protein bL35 from Paramagnetospirillum magneticum (strain ATCC 700264 / AMB-1) (Magnetospirillum magneticum).